Reading from the N-terminus, the 347-residue chain is UDP-N-acetylenolpyruvoylglucosamine reductase (347 aa).

The FAD-binding PCMH-type domain maps to 23 to 197 (LPARAARLLR…LRVRFRLPQA (175 aa)). Arginine 174 is a catalytic residue. Serine 247 serves as the catalytic Proton donor. Residue glutamate 343 is part of the active site.

The protein belongs to the MurB family. It depends on FAD as a cofactor.

It localises to the cytoplasm. It carries out the reaction UDP-N-acetyl-alpha-D-muramate + NADP(+) = UDP-N-acetyl-3-O-(1-carboxyvinyl)-alpha-D-glucosamine + NADPH + H(+). Its pathway is cell wall biogenesis; peptidoglycan biosynthesis. In terms of biological role, cell wall formation. This is UDP-N-acetylenolpyruvoylglucosamine reductase from Azoarcus sp. (strain BH72).